A 656-amino-acid polypeptide reads, in one-letter code: Nexilin (656 aa).

3 disordered regions span residues 1 to 131 (MNDV…IEQD), 165 to 198 (RAAA…EEEC), and 215 to 284 (TEAK…VFKE). Residues 11 to 26 (LLSSSKPVPKSYVPKL) are compositionally biased toward low complexity. Basic and acidic residues predominate over residues 27 to 78 (GKGDVKDKFEAMQRAREERNQRRSRDEKQRRKEQYIREREWNRRKQEIKDML). Residue Ser80 is modified to Phosphoserine. 3 stretches are compositionally biased toward basic and acidic residues: residues 103–131 (GKFD…IEQD), 169–198 (NRKD…EEEC), and 216–269 (EAKK…RNMV). Phosphoserine occurs at positions 221, 330, 337, and 345. Phosphothreonine is present on Thr350. Disordered regions lie at residues 468–492 (NFHE…HKVN) and 529–564 (AALQ…APWF). Ser544 and Ser549 each carry phosphoserine. Thr551 carries the post-translational modification Phosphothreonine. An Ig-like domain is found at 562 to 650 (PWFKKPLRNT…GSAASTCILT (89 aa)).

As to quaternary structure, interacts with F-actin. In terms of tissue distribution, expressed in brain, testis, spleen and fibroblasts (at protein level). Not detected in liver, kidney or epithelial cells (at protein level).

It localises to the cytoplasm. Its subcellular location is the cytoskeleton. The protein localises to the cell junction. The protein resides in the adherens junction. It is found in the myofibril. It localises to the sarcomere. Its subcellular location is the z line. Involved in regulating cell migration through association with the actin cytoskeleton. Has an essential role in the maintenance of Z line and sarcomere integrity. The protein is Nexilin of Rattus norvegicus (Rat).